Consider the following 272-residue polypeptide: F-box protein PP2-B10 (272 aa).

Residues 11-57 form the F-box domain; sequence SSPFDSFPEDCISYIISFTNPRDACVAATVSKTFESTVKSDIIWEKF.

In terms of assembly, part of a SCF (ASK-cullin-F-box) protein ligase complex. Interacts with SKP1B/ASK2, ASK11 and ASK12.

The protein operates within protein modification; protein ubiquitination. Functionally, component of SCF(ASK-cullin-F-box) E3 ubiquitin ligase complexes, which may mediate the ubiquitination and subsequent proteasomal degradation of target proteins. The sequence is that of F-box protein PP2-B10 (PP2B10) from Arabidopsis thaliana (Mouse-ear cress).